We begin with the raw amino-acid sequence, 231 residues long: 2-C-methyl-D-erythritol 4-phosphate cytidylyltransferase (231 aa).

This sequence belongs to the IspD/TarI cytidylyltransferase family. IspD subfamily.

It catalyses the reaction 2-C-methyl-D-erythritol 4-phosphate + CTP + H(+) = 4-CDP-2-C-methyl-D-erythritol + diphosphate. It participates in isoprenoid biosynthesis; isopentenyl diphosphate biosynthesis via DXP pathway; isopentenyl diphosphate from 1-deoxy-D-xylulose 5-phosphate: step 2/6. Its function is as follows. Catalyzes the formation of 4-diphosphocytidyl-2-C-methyl-D-erythritol from CTP and 2-C-methyl-D-erythritol 4-phosphate (MEP). The polypeptide is 2-C-methyl-D-erythritol 4-phosphate cytidylyltransferase (Lysinibacillus sphaericus (strain C3-41)).